A 614-amino-acid polypeptide reads, in one-letter code: Nuclear receptor subfamily 1 group D member 1 (614 aa).

The span at 1 to 12 (MTTLDSNNNTGG) shows a compositional bias: polar residues. The tract at residues 1–70 (MTTLDSNNNT…TQDPARSFGS (70 aa)) is required for phosphorylation by CSNK1E and cytoplasmic localization. The segment at 1 to 119 (MTTLDSNNNT…SSRVSPSKST (119 aa)) is disordered. The tract at residues 1–128 (MTTLDSNNNT…TSNITKLNGM (128 aa)) is modulating. Over residues 14–34 (ITYIGSSGSSPSRTSPESLYS) the composition is skewed to low complexity. Residues 35 to 48 (DNSNGSFQSLTQGC) are compositionally biased toward polar residues. The crucial for activation of GJA1 stretch occupies residues 49-284 (PTYFPPSPTG…PPRSPSPEPT (236 aa)). Phosphoserine; by GSK3-beta occurs at positions 55 and 59. Positions 69-102 (GSIPPSLSDDGSPSSSSSSSSSSSSFYNGSPPGS) are enriched in low complexity. Positions 129–205 (VLLCKVCGDV…VGMSRDAVRF (77 aa)) form a DNA-binding region, nuclear receptor. 2 consecutive NR C4-type zinc fingers follow at residues 132 to 152 (CKVC…CEGC) and 169 to 193 (CLKN…FKKC). N6-acetyllysine; by KAT5 occurs at positions 191 and 192. Positions 233–243 (SQCPLETSPTQ) are enriched in polar residues. 2 disordered regions span residues 233-285 (SQCP…EPTV) and 311-345 (PGNF…DNNT). Residues 244–261 (HPTPGPMGPSPPPAPVPS) are compositionally biased toward pro residues. Thr-274 is modified (phosphothreonine; by CDK1). An NR LBD domain is found at 284–614 (TVEDVISQVA…KLLSFRVDAQ (331 aa)). Over residues 311–324 (PGNFNANHASGSPP) the composition is skewed to polar residues. Lys-400 carries the post-translational modification N6-acetyllysine. Cys-418 is a binding site for heme. N6-acetyllysine is present on Lys-591. Residue His-602 participates in heme binding.

This sequence belongs to the nuclear hormone receptor family. NR1 subfamily. As to quaternary structure, binds DNA as a monomer or a homodimer. Interacts with C1D, NR2E3 and SP1. Interacts with OPHN1 (via C-terminus). Interacts with ZNHIT1. Interacts with PER2; the interaction associates PER2 to BMAL1 promoter region. Interacts with CRY1. Interacts with CCAR2. Interacts with SIAH2. Interacts with CDK1. Interacts with FBXW7. Interacts with HUWE1. Interacts with NR0B2. Interacts with NFIL3. Interacts (via domain NR LBD) with HSP90AA1 and HSP90AB1. In terms of processing, ubiquitinated, leading to its proteasomal degradation. Ubiquitinated by SIAH2; leading to its proteasomal degradation. Ubiquitinated by the SCF(FBXW7) complex when phosphorylated by CDK1 leading to its proteasomal degradation. Rapidly ubiquitinated in response to inflammatory triggers and sumoylation is a prerequisite to its ubiquitination. Post-translationally, sumoylated by UBE2I, desumoylated by SENP1, and sumoylation is a prerequisite to its ubiquitination. Phosphorylated by CSNK1E; phosphorylation enhances its cytoplasmic localization. In terms of processing, undergoes lysosome-mediated degradation in a time-dependent manner in the liver. In terms of tissue distribution, widely expressed. Expressed at high levels in the liver, adipose tissue, skeletal muscle and brain. Also expressed in endothelial cells (ECs), vascular smooth muscle cells (VSMCs) and macrophages. Expression oscillates diurnally in the suprachiasmatic nucleus (SCN) of the hypothalamus as well as in peripheral tissues. Expression increases during the differentiation of pre-adipocytes into mature adipocytes. Expressed at high levels in some squamous carcinoma cell lines.

The protein resides in the nucleus. It localises to the cytoplasm. Its subcellular location is the cell projection. The protein localises to the dendrite. It is found in the dendritic spine. Its function is as follows. Transcriptional repressor which coordinates circadian rhythm and metabolic pathways in a heme-dependent manner. Integral component of the complex transcription machinery that governs circadian rhythmicity and forms a critical negative limb of the circadian clock by directly repressing the expression of core clock components BMAL1, CLOCK and CRY1. Also regulates genes involved in metabolic functions, including lipid and bile acid metabolism, adipogenesis, gluconeogenesis and the macrophage inflammatory response. Acts as a receptor for heme which stimulates its interaction with the NCOR1/HDAC3 corepressor complex, enhancing transcriptional repression. Recognizes two classes of DNA response elements within the promoter of its target genes and can bind to DNA as either monomers or homodimers, depending on the nature of the response element. Binds as a monomer to a response element composed of the consensus half-site motif 5'-[A/G]GGTCA-3' preceded by an A/T-rich 5' sequence (RevRE), or as a homodimer to a direct repeat of the core motif spaced by two nucleotides (RevDR-2). Acts as a potent competitive repressor of ROR alpha (RORA) function and regulates the levels of its ligand heme by repressing the expression of PPARGC1A, a potent inducer of heme synthesis. Regulates lipid metabolism by repressing the expression of APOC3 and by influencing the activity of sterol response element binding proteins (SREBPs); represses INSIG2 which interferes with the proteolytic activation of SREBPs which in turn govern the rhythmic expression of enzymes with key functions in sterol and fatty acid synthesis. Regulates gluconeogenesis via repression of G6PC1 and PEPCK and adipocyte differentiation via repression of PPARG. Regulates glucagon release in pancreatic alpha-cells via the AMPK-NAMPT-SIRT1 pathway and the proliferation, glucose-induced insulin secretion and expression of key lipogenic genes in pancreatic-beta cells. Positively regulates bile acid synthesis by increasing hepatic expression of CYP7A1 via repression of NR0B2 and NFIL3 which are negative regulators of CYP7A1. Modulates skeletal muscle oxidative capacity by regulating mitochondrial biogenesis and autophagy; controls mitochondrial biogenesis and respiration by interfering with the STK11-PRKAA1/2-SIRT1-PPARGC1A signaling pathway. Represses the expression of SERPINE1/PAI1, an important modulator of cardiovascular disease and the expression of inflammatory cytokines and chemokines in macrophages. Represses gene expression at a distance in macrophages by inhibiting the transcription of enhancer-derived RNAs (eRNAs). Plays a role in the circadian regulation of body temperature and negatively regulates thermogenic transcriptional programs in brown adipose tissue (BAT); imposes a circadian oscillation in BAT activity, increasing body temperature when awake and depressing thermogenesis during sleep. In concert with NR2E3, regulates transcriptional networks critical for photoreceptor development and function. In addition to its activity as a repressor, can also act as a transcriptional activator. In the ovarian granulosa cells acts as a transcriptional activator of STAR which plays a role in steroid biosynthesis. In collaboration with SP1, activates GJA1 transcription in a heme-independent manner. Represses the transcription of CYP2B10, CYP4A10 and CYP4A14. Represses the transcription of CES2. Represses and regulates the circadian expression of TSHB in a NCOR1-dependent manner. Negatively regulates the protein stability of NR3C1 and influences the time-dependent subcellular distribution of NR3C1, thereby affecting its transcriptional regulatory activity. Plays a critical role in the circadian control of neutrophilic inflammation in the lung; under resting, non-stress conditions, acts as a rhythmic repressor to limit inflammatory activity whereas in the presence of inflammatory triggers undergoes ubiquitin-mediated degradation thereby relieving inhibition of the inflammatory response. Plays a key role in the circadian regulation of microglial activation and neuroinflammation; suppresses microglial activation through the NF-kappaB pathway in the central nervous system. Plays a role in the regulation of the diurnal rhythms of lipid and protein metabolism in the skeletal muscle via transcriptional repression of genes controlling lipid and amino acid metabolism in the muscle. This Homo sapiens (Human) protein is Nuclear receptor subfamily 1 group D member 1 (NR1D1).